A 491-amino-acid chain; its full sequence is UDP-N-acetylmuramate--L-alanine ligase (491 aa).

126 to 132 serves as a coordination point for ATP; sequence GTHGKTT.

This sequence belongs to the MurCDEF family.

It localises to the cytoplasm. It carries out the reaction UDP-N-acetyl-alpha-D-muramate + L-alanine + ATP = UDP-N-acetyl-alpha-D-muramoyl-L-alanine + ADP + phosphate + H(+). It functions in the pathway cell wall biogenesis; peptidoglycan biosynthesis. In terms of biological role, cell wall formation. This chain is UDP-N-acetylmuramate--L-alanine ligase, found in Salmonella typhimurium (strain LT2 / SGSC1412 / ATCC 700720).